A 98-amino-acid chain; its full sequence is NADH-ubiquinone oxidoreductase chain 4L (98 aa).

3 helical membrane passes run 1–21, 29–49, and 58–78; these read MPIIYMNIMLAFTISLLGMLI, SLLCLEGMMLSLFIMNTLMAL, and IVPITLLVFAACEAAVGLALL.

Belongs to the complex I subunit 4L family. Core subunit of respiratory chain NADH dehydrogenase (Complex I) which is composed of 45 different subunits.

The protein resides in the mitochondrion inner membrane. It carries out the reaction a ubiquinone + NADH + 5 H(+)(in) = a ubiquinol + NAD(+) + 4 H(+)(out). In terms of biological role, core subunit of the mitochondrial membrane respiratory chain NADH dehydrogenase (Complex I) which catalyzes electron transfer from NADH through the respiratory chain, using ubiquinone as an electron acceptor. Part of the enzyme membrane arm which is embedded in the lipid bilayer and involved in proton translocation. This chain is NADH-ubiquinone oxidoreductase chain 4L (MT-ND4L), found in Colobus guereza (Mantled guereza).